Reading from the N-terminus, the 852-residue chain is Beta-galactosidase 8 (852 aa).

The N-terminal stretch at 1-29 is a signal peptide; sequence MEIAAKMVKVRKMEMILLLILVIVVAATA. A glycan (N-linked (GlcNAc...) asparagine) is linked at N31. Catalysis depends on E188, which acts as the Proton donor. Catalysis depends on E257, which acts as the Nucleophile. 4 N-linked (GlcNAc...) asparagine glycosylation sites follow: N258, N475, N766, and N807. One can recognise an SUEL-type lectin domain in the interval 766 to 852; that stretch reads NRTRPVLSLK…KSLAVEASCS (87 aa).

It belongs to the glycosyl hydrolase 35 family. Expressed in roots, flowers and siliques.

It localises to the secreted. Its subcellular location is the extracellular space. The protein localises to the apoplast. The enzyme catalyses Hydrolysis of terminal non-reducing beta-D-galactose residues in beta-D-galactosides.. The sequence is that of Beta-galactosidase 8 (BGAL8) from Arabidopsis thaliana (Mouse-ear cress).